Here is an 88-residue protein sequence, read N- to C-terminus: Putative regulatory protein Ava_1474 (88 aa).

Belongs to the RemA family.

The protein is Putative regulatory protein Ava_1474 of Trichormus variabilis (strain ATCC 29413 / PCC 7937) (Anabaena variabilis).